The following is a 56-amino-acid chain: Large ribosomal subunit protein bL32 (56 aa).

The span at 1 to 20 shows a compositional bias: basic residues; sequence MAVPKKKKSKSKRNHRHAVW. The disordered stretch occupies residues 1 to 21; it reads MAVPKKKKSKSKRNHRHAVWK.

Belongs to the bacterial ribosomal protein bL32 family.

The polypeptide is Large ribosomal subunit protein bL32 (Prochlorococcus marinus (strain MIT 9312)).